The sequence spans 238 residues: Orotidine 5'-phosphate decarboxylase (238 aa).

Residues Asp-18, Lys-40, 67 to 76 (DMKLLDIDNT), Thr-122, Arg-183, Gln-192, and Arg-213 each bind substrate. Lys-69 acts as the Proton donor in catalysis.

This sequence belongs to the OMP decarboxylase family. Type 1 subfamily. In terms of assembly, homodimer.

It catalyses the reaction orotidine 5'-phosphate + H(+) = UMP + CO2. It functions in the pathway pyrimidine metabolism; UMP biosynthesis via de novo pathway; UMP from orotate: step 2/2. Its function is as follows. Catalyzes the decarboxylation of orotidine 5'-monophosphate (OMP) to uridine 5'-monophosphate (UMP). This Brucella melitensis biotype 2 (strain ATCC 23457) protein is Orotidine 5'-phosphate decarboxylase.